The primary structure comprises 139 residues: ATP synthase epsilon chain (139 aa).

This sequence belongs to the ATPase epsilon chain family. In terms of assembly, F-type ATPases have 2 components, CF(1) - the catalytic core - and CF(0) - the membrane proton channel. CF(1) has five subunits: alpha(3), beta(3), gamma(1), delta(1), epsilon(1). CF(0) has three main subunits: a, b and c.

It is found in the cell inner membrane. Its function is as follows. Produces ATP from ADP in the presence of a proton gradient across the membrane. This chain is ATP synthase epsilon chain, found in Pseudomonas putida (strain W619).